The following is a 254-amino-acid chain: Imidazole glycerol phosphate synthase subunit HisF (254 aa).

Catalysis depends on residues Asp-11 and Asp-130.

It belongs to the HisA/HisF family. In terms of assembly, heterodimer of HisH and HisF.

It is found in the cytoplasm. The catalysed reaction is 5-[(5-phospho-1-deoxy-D-ribulos-1-ylimino)methylamino]-1-(5-phospho-beta-D-ribosyl)imidazole-4-carboxamide + L-glutamine = D-erythro-1-(imidazol-4-yl)glycerol 3-phosphate + 5-amino-1-(5-phospho-beta-D-ribosyl)imidazole-4-carboxamide + L-glutamate + H(+). Its pathway is amino-acid biosynthesis; L-histidine biosynthesis; L-histidine from 5-phospho-alpha-D-ribose 1-diphosphate: step 5/9. Functionally, IGPS catalyzes the conversion of PRFAR and glutamine to IGP, AICAR and glutamate. The HisF subunit catalyzes the cyclization activity that produces IGP and AICAR from PRFAR using the ammonia provided by the HisH subunit. This chain is Imidazole glycerol phosphate synthase subunit HisF, found in Staphylococcus carnosus (strain TM300).